Consider the following 116-residue polypeptide: IGNFVEVKKSTFGKGSKAPHLSYIGDAEVGADVNLGCGSITVNYDGVNKHMTKIENGAFIGCNVNLIAPVTVGQGAYVAAGSTITNDVPGRALAIARARQVNKENYVDRLPGKKKS.

K8 is a binding site for acetyl-CoA. Residue H20 is the Proton acceptor of the active site. Acetyl-CoA-binding positions include Y23, N34, 43 to 44, A80, and R97; that span reads NY.

It in the N-terminal section; belongs to the N-acetylglucosamine-1-phosphate uridyltransferase family. This sequence in the C-terminal section; belongs to the transferase hexapeptide repeat family. Requires Mg(2+) as cofactor.

The protein resides in the cytoplasm. It catalyses the reaction alpha-D-glucosamine 1-phosphate + acetyl-CoA = N-acetyl-alpha-D-glucosamine 1-phosphate + CoA + H(+). It carries out the reaction N-acetyl-alpha-D-glucosamine 1-phosphate + UTP + H(+) = UDP-N-acetyl-alpha-D-glucosamine + diphosphate. The protein operates within nucleotide-sugar biosynthesis; UDP-N-acetyl-alpha-D-glucosamine biosynthesis; N-acetyl-alpha-D-glucosamine 1-phosphate from alpha-D-glucosamine 6-phosphate (route II): step 2/2. It functions in the pathway nucleotide-sugar biosynthesis; UDP-N-acetyl-alpha-D-glucosamine biosynthesis; UDP-N-acetyl-alpha-D-glucosamine from N-acetyl-alpha-D-glucosamine 1-phosphate: step 1/1. It participates in bacterial outer membrane biogenesis; LPS lipid A biosynthesis. In terms of biological role, catalyzes the last two sequential reactions in the de novo biosynthetic pathway for UDP-N-acetylglucosamine (UDP-GlcNAc). The C-terminal domain catalyzes the transfer of acetyl group from acetyl coenzyme A to glucosamine-1-phosphate (GlcN-1-P) to produce N-acetylglucosamine-1-phosphate (GlcNAc-1-P), which is converted into UDP-GlcNAc by the transfer of uridine 5-monophosphate (from uridine 5-triphosphate), a reaction catalyzed by the N-terminal domain. The chain is Bifunctional protein GlmU (glmU) from Bacillus caldolyticus.